A 213-amino-acid chain; its full sequence is Large ribosomal subunit protein uL3 (213 aa).

It belongs to the universal ribosomal protein uL3 family. As to quaternary structure, part of the 50S ribosomal subunit. Forms a cluster with proteins L14 and L19.

Functionally, one of the primary rRNA binding proteins, it binds directly near the 3'-end of the 23S rRNA, where it nucleates assembly of the 50S subunit. The chain is Large ribosomal subunit protein uL3 from Petrotoga mobilis (strain DSM 10674 / SJ95).